Consider the following 180-residue polypeptide: Der GTPase-activating protein YihI (180 aa).

The span at 1-10 (MKQPARTSQV) shows a compositional bias: polar residues. Disordered stretches follow at residues 1–102 (MKQP…PRLT) and 158–180 (DAED…RTPE). Positions 21-32 (TREEINQEARDR) are enriched in basic and acidic residues. A compositionally biased stretch (polar residues) spans 45–54 (SRANPATVSQ). Over residues 55 to 67 (KGDKSQSVKDPRI) the composition is skewed to basic and acidic residues. Residues 84–93 (PANPVKAAKP) are compositionally biased toward low complexity.

The protein belongs to the YihI family. As to quaternary structure, interacts with Der.

A GTPase-activating protein (GAP) that modifies Der/EngA GTPase function. May play a role in ribosome biogenesis. This is Der GTPase-activating protein YihI from Erwinia tasmaniensis (strain DSM 17950 / CFBP 7177 / CIP 109463 / NCPPB 4357 / Et1/99).